We begin with the raw amino-acid sequence, 148 residues long: Protein H2A.6 (148 aa).

Residues 120–148 (GAAEKESTKSPKKKAATKSPKKKTAATKE) are disordered. 2 short sequence motifs (SPKK motif) span residues 129 to 132 (SPKK) and 138 to 141 (SPKK). A compositionally biased stretch (basic residues) spans 129-148 (SPKKKAATKSPKKKTAATKE).

The protein belongs to the histone H2A family. In terms of assembly, the nucleosome is a histone octamer containing two molecules each of H2A, H2B, H3 and H4 assembled in one H3-H4 heterotetramer and two H2A-H2B heterodimers. The octamer wraps approximately 147 bp of DNA. Abundant in meristematic tissues.

It is found in the nucleus. The protein resides in the chromosome. Core component of nucleosome. Nucleosomes wrap and compact DNA into chromatin, limiting DNA accessibility to the cellular machineries which require DNA as a template. Histones thereby play a central role in transcription regulation, DNA repair, DNA replication and chromosomal stability. DNA accessibility is regulated via a complex set of post-translational modifications of histones, also called histone code, and nucleosome remodeling. This Triticum aestivum (Wheat) protein is Protein H2A.6 (H2A-3).